Reading from the N-terminus, the 30-residue chain is Non-toxic phospholipase A2 (30 aa).

The Ca(2+) site is built by Y26, G28, and G30.

The protein belongs to the phospholipase A2 family. Group I subfamily. Homodimer. Ca(2+) serves as cofactor. Post-translationally, glycosylated. In terms of tissue distribution, expressed by the venom gland.

The protein localises to the secreted. The catalysed reaction is a 1,2-diacyl-sn-glycero-3-phosphocholine + H2O = a 1-acyl-sn-glycero-3-phosphocholine + a fatty acid + H(+). Its activity is regulated as follows. Enzymatic activity is diminished by Cd(2+) and Hg(2+). In terms of biological role, relatively highly potent phospholipase A2 that displays potent antimicrobial and hemolytic activities. It does not show cytotoxic effects on the three human cell lines tested. PLA2 catalyzes the calcium-dependent hydrolysis of the 2-acyl groups in 3-sn-phosphoglycerides. It shows similar potencies on both Gram-negative and Gram-positive bacteria: B.cereus (MIC&gt;9 ug/ml), B.subtilis (MIC&gt;12 ug/ml), E.faecalis (MIC&gt;7 ug/ml), S.epidermidis (MIC&gt;12 ug/ml), S.aureux (MIC&gt;5 ug/ml), E.coli (MIC&gt;7 ug/ml), K.pneumonia (MIC&gt;8 ug/ml), P.aeruginosa (MIC&gt;10 ug/ml), and S.enteric (MIC&gt;9 ug/ml). It also shows antifungal activities: A.niger (MIC&gt;15 ug/ml), B.cinerea (MIC&gt;12 ug/ml), F.solani (MIC&gt;15 ug/ml), and P.digitatum (MIC&gt;10 ug/ml). This Walterinnesia aegyptia (Desert black snake) protein is Non-toxic phospholipase A2.